The sequence spans 137 residues: Sec-independent protein translocase protein TatB (137 aa).

Residues Phe2–Gly22 form a helical membrane-spanning segment. Residues Phe92–Thr137 form a disordered region. The segment covering Thr122–Pro131 has biased composition (low complexity).

This sequence belongs to the TatB family. In terms of assembly, the Tat system comprises two distinct complexes: a TatABC complex, containing multiple copies of TatA, TatB and TatC subunits, and a separate TatA complex, containing only TatA subunits. Substrates initially bind to the TatABC complex, which probably triggers association of the separate TatA complex to form the active translocon.

Its subcellular location is the cell membrane. In terms of biological role, part of the twin-arginine translocation (Tat) system that transports large folded proteins containing a characteristic twin-arginine motif in their signal peptide across membranes. Together with TatC, TatB is part of a receptor directly interacting with Tat signal peptides. TatB may form an oligomeric binding site that transiently accommodates folded Tat precursor proteins before their translocation. In Mycobacterium sp. (strain JLS), this protein is Sec-independent protein translocase protein TatB.